The sequence spans 158 residues: Immunoglobulin J chain (158 aa).

A signal peptide spans 1 to 22 (MKNHLFFWGVLAIFVQAVLVTA). 3 disulfides stabilise this stretch: Cys-36/Cys-122, Cys-95/Cys-115, and Cys-130/Cys-155. A glycan (N-linked (GlcNAc...) (complex) asparagine) is linked at Asn-72.

Part of the secretory IgA (sIgA) complex that consists of two, four or five IgA monomers, and two additional non-Ig polypeptides, namely the JCHAIN and the secretory component (the proteolytic product of PIGR). Part of the secretory IgM (sIgM) complex that consist of five IgM monomers, and two additional non-Ig polypeptides, namely the JCHAIN and the secretory component (the proteolytic product of PIGR). JCHAIN-containing IgM interacts (via CH4 domain) with FCRM (via Ig-like domain). Post-translationally, N-glycosylated. N-glycans attached to Asn-72 varies from truncated, differentially fucosylated to sialylated (NeuGc) complex types: Man3GlcNAc2; GlcNAc2Man3GlcNAc2(Fuc); Gal1GlcNAc1Man3GlcNAc2; GlcNAc2Man3GlcNAc2; GlcNAc1Man3GlcNAc2; GlcNAc1Man2GlcNAc2 and NeuGc1Gal1GlcNAc2Man3GlcNAc2.

It localises to the secreted. In terms of biological role, serves to link two monomer units of either IgM or IgA. In the case of IgM, the J chain-joined dimer is a nucleating unit for the IgM pentamer, and in the case of IgA it induces dimers and/or larger polymers. It also helps to bind these immunoglobulins to secretory component. The chain is Immunoglobulin J chain (JCHAIN) from Equus asinus (Donkey).